Here is a 446-residue protein sequence, read N- to C-terminus: Elongation factor Ts, mitochondrial (446 aa).

Residues 1–33 (MSGSRSALSVVRLAACAKPCTLGSTSSVLTRPF) constitute a mitochondrion transit peptide.

This sequence belongs to the EF-Ts family.

Its subcellular location is the mitochondrion. In terms of biological role, associates with the EF-Tu.GDP complex and induces the exchange of GDP to GTP. It remains bound to the aminoacyl-tRNA.EF-Tu.GTP complex up to the GTP hydrolysis stage on the ribosome. This Mycosarcoma maydis (Corn smut fungus) protein is Elongation factor Ts, mitochondrial.